A 194-amino-acid chain; its full sequence is Peptidyl-tRNA hydrolase (194 aa).

TRNA is bound at residue Tyr-17. Catalysis depends on His-22, which acts as the Proton acceptor. 3 residues coordinate tRNA: Tyr-69, Asn-71, and Asn-117.

Belongs to the PTH family. In terms of assembly, monomer.

The protein localises to the cytoplasm. It catalyses the reaction an N-acyl-L-alpha-aminoacyl-tRNA + H2O = an N-acyl-L-amino acid + a tRNA + H(+). Its function is as follows. Hydrolyzes ribosome-free peptidyl-tRNAs (with 1 or more amino acids incorporated), which drop off the ribosome during protein synthesis, or as a result of ribosome stalling. In terms of biological role, catalyzes the release of premature peptidyl moieties from peptidyl-tRNA molecules trapped in stalled 50S ribosomal subunits, and thus maintains levels of free tRNAs and 50S ribosomes. The polypeptide is Peptidyl-tRNA hydrolase (Paenarthrobacter aurescens (strain TC1)).